Consider the following 156-residue polypeptide: Endoribonuclease YbeY (156 aa).

The Zn(2+) site is built by histidine 115, histidine 119, and histidine 125.

The protein belongs to the endoribonuclease YbeY family. It depends on Zn(2+) as a cofactor.

Its subcellular location is the cytoplasm. Single strand-specific metallo-endoribonuclease involved in late-stage 70S ribosome quality control and in maturation of the 3' terminus of the 16S rRNA. This chain is Endoribonuclease YbeY, found in Mannheimia succiniciproducens (strain KCTC 0769BP / MBEL55E).